Here is an 88-residue protein sequence, read N- to C-terminus: Toxin RelE3 (88 aa).

The protein belongs to the RelE toxin family. Forms heterodimers with RelB3 and possibly a heterotetramer RelE3-RelB3(2)-RelE3 from 2 heterodimers. The heterotetramer is probably not very stable in solution.

Functionally, toxic component of a type II toxin-antitoxin (TA) system. Has RNase activity. Is very toxic upon expression in E.coli. Its toxic activity is probably neutralized by the cognate antitoxin RelB3. In Methanocaldococcus jannaschii (strain ATCC 43067 / DSM 2661 / JAL-1 / JCM 10045 / NBRC 100440) (Methanococcus jannaschii), this protein is Toxin RelE3 (relE3).